The primary structure comprises 239 residues: Probable 2-phosphosulfolactate phosphatase (239 aa).

Belongs to the ComB family. It depends on Mg(2+) as a cofactor.

It carries out the reaction (2R)-O-phospho-3-sulfolactate + H2O = (2R)-3-sulfolactate + phosphate. The polypeptide is Probable 2-phosphosulfolactate phosphatase (Clostridium botulinum (strain Loch Maree / Type A3)).